Consider the following 189-residue polypeptide: Elongation factor P (189 aa).

Position 34 is an N6-(3,6-diaminohexanoyl)-5-hydroxylysine (lysine 34).

The protein belongs to the elongation factor P family. Post-translationally, may be beta-lysylated on the epsilon-amino group of Lys-34 by the combined action of EpmA and EpmB, and then hydroxylated on the C5 position of the same residue by EpmC (if this protein is present). Lysylation is critical for the stimulatory effect of EF-P on peptide-bond formation. The lysylation moiety may extend toward the peptidyltransferase center and stabilize the terminal 3-CCA end of the tRNA. Hydroxylation of the C5 position on Lys-34 may allow additional potential stabilizing hydrogen-bond interactions with the P-tRNA.

The protein localises to the cytoplasm. It functions in the pathway protein biosynthesis; polypeptide chain elongation. Its function is as follows. Involved in peptide bond synthesis. Alleviates ribosome stalling that occurs when 3 or more consecutive Pro residues or the sequence PPG is present in a protein, possibly by augmenting the peptidyl transferase activity of the ribosome. Modification of Lys-34 is required for alleviation. The polypeptide is Elongation factor P (Teredinibacter turnerae (strain ATCC 39867 / T7901)).